The chain runs to 278 residues: Large ribosomal subunit protein uL2 (278 aa).

The interval 222 to 264 (GVAMNPIDHPHGGGEGRTSGGRHPVTPWGKPTKGRKTRKNKAT) is disordered.

This sequence belongs to the universal ribosomal protein uL2 family. Part of the 50S ribosomal subunit. Forms a bridge to the 30S subunit in the 70S ribosome.

One of the primary rRNA binding proteins. Required for association of the 30S and 50S subunits to form the 70S ribosome, for tRNA binding and peptide bond formation. It has been suggested to have peptidyltransferase activity; this is somewhat controversial. Makes several contacts with the 16S rRNA in the 70S ribosome. The protein is Large ribosomal subunit protein uL2 of Phenylobacterium zucineum (strain HLK1).